We begin with the raw amino-acid sequence, 153 residues long: Arginine repressor (153 aa).

Belongs to the ArgR family.

Its subcellular location is the cytoplasm. The protein operates within amino-acid biosynthesis; L-arginine biosynthesis [regulation]. Functionally, regulates arginine biosynthesis genes. The protein is Arginine repressor of Syntrophomonas wolfei subsp. wolfei (strain DSM 2245B / Goettingen).